The primary structure comprises 319 residues: MSLSPRSDRTEIRRSWGLDSIVSALSQASTDPLPHHLLSDQFYPLPSRESLGLILHGLRSVLFPRHFGDPELSVETTHYFIGNTLDKTLNLLNEQIRRELWLQHVTQGTPEATPAVLSQHASELTQAFAQALPEIKRLLDSDVNAAYLGDPAAQSISEILFCYPGITAITFHRLAHRLYQLGLPLLARITAEVSHSETGIDIHPGAAIGGSFFIDHGTGVVIGETCVIGDRVRIYQAVTLGAKSFPRDETGALIKGQARHPVIEDDVVIYAGATLLGRITVGRGSTIGGNVWLTRSVPAGSFISQAQIRSDNFESGGGI.

Belongs to the transferase hexapeptide repeat family.

The protein resides in the cytoplasm. It carries out the reaction L-serine + acetyl-CoA = O-acetyl-L-serine + CoA. It participates in amino-acid biosynthesis; L-cysteine biosynthesis; L-cysteine from L-serine: step 1/2. In Synechococcus elongatus (strain ATCC 33912 / PCC 7942 / FACHB-805) (Anacystis nidulans R2), this protein is Serine acetyltransferase, plasmid (srpH).